A 409-amino-acid polypeptide reads, in one-letter code: Peptidase T (409 aa).

A Zn(2+)-binding site is contributed by histidine 78. The active site involves aspartate 80. Zn(2+) is bound at residue aspartate 140. The active-site Proton acceptor is the glutamate 174. Zn(2+)-binding residues include glutamate 175, aspartate 197, and histidine 379.

This sequence belongs to the peptidase M20B family. It depends on Zn(2+) as a cofactor.

Its subcellular location is the cytoplasm. It catalyses the reaction Release of the N-terminal residue from a tripeptide.. Its function is as follows. Cleaves the N-terminal amino acid of tripeptides. The polypeptide is Peptidase T (Aliivibrio salmonicida (strain LFI1238) (Vibrio salmonicida (strain LFI1238))).